Here is a 523-residue protein sequence, read N- to C-terminus: Synaptotagmin-10 (523 aa).

At 1–55 the chain is on the vesicular side; the sequence is MSFHKEDGVNSLCQKALHIVTELCFAGQVEWEKCSGIFPRDRGSQGGSSTDISVS. Positions 13 to 35 are cysteine motif; that stretch reads CQKALHIVTELCFAGQVEWEKCS. A helical membrane pass occupies residues 56–76; it reads LLAVVVSFCGLALLVVSLFVF. Residues 77–523 lie on the Cytoplasmic side of the membrane; the sequence is WKLCWPCWKS…CPSPKPPSTP (447 aa). Residue threonine 136 is modified to Phosphothreonine. 2 C2 domains span residues 231–352 and 363–496; these read ICGK…TVWK and DLGE…THWH. 11 residues coordinate Ca(2+): aspartate 262, aspartate 268, aspartate 320, phenylalanine 321, aspartate 322, serine 325, aspartate 328, aspartate 394, aspartate 400, aspartate 454, and aspartate 456.

It belongs to the synaptotagmin family. In terms of assembly, homodimer; disulfide-linked via the cysteine motif. Can also form heterodimers with SYT3, SYT6, SYT7 and SYT9. Ca(2+) serves as cofactor.

The protein localises to the cytoplasmic vesicle. It localises to the secretory vesicle membrane. Ca(2+) sensor specifically required for the Ca(2+)-dependent exocytosis of secretory vesicles containing IGF1 in neurons of the olfactory bulb. Exocytosis of IGF1 is required for sensory perception of smell. Not involved in Ca(2+)-dependent synaptic vesicle exocytosis. Acts through Ca(2+) and phospholipid binding to the C2 domain: Ca(2+) induces binding of the C2-domains to phospholipid membranes and to assembled SNARE-complexes; both actions contribute to triggering exocytosis. The chain is Synaptotagmin-10 (SYT10) from Pongo abelii (Sumatran orangutan).